Here is a 62-residue protein sequence, read N- to C-terminus: Conotoxin Qc5.1 (62 aa).

The first 22 residues, M1–A22, serve as a signal peptide directing secretion. A propeptide spanning residues H23–M48 is cleaved from the precursor. Position 60 is a valine amide (V60).

It belongs to the conotoxin T superfamily. Post-translationally, contains 2 disulfide bonds that can be either 'C1-C3, C2-C4' or 'C1-C4, C2-C3', since these disulfide connectivities have been observed for conotoxins with cysteine framework V (for examples, see AC P0DQQ7 and AC P81755). In terms of tissue distribution, expressed by the venom duct.

It localises to the secreted. The sequence is that of Conotoxin Qc5.1 from Conus quercinus (Oak cone).